The chain runs to 1551 residues: Pentafunctional AROM polypeptide (1551 aa).

The tract at residues 1 to 379 (MSIEKVPILG…YQLKAHQVSK (379 aa)) is 3-dehydroquinate synthase. Residues 42-44 (DTN), 80-83 (ENNK), 111-113 (GGV), and aspartate 116 each bind NAD(+). Arginine 127 contributes to the 7-phospho-2-dehydro-3-deoxy-D-arabino-heptonate binding site. 136-137 (TT) provides a ligand contact to NAD(+). 7-phospho-2-dehydro-3-deoxy-D-arabino-heptonate-binding residues include aspartate 143 and lysine 149. Lysine 158 contributes to the NAD(+) binding site. Position 159 (asparagine 159) interacts with 7-phospho-2-dehydro-3-deoxy-D-arabino-heptonate. Residues 176–179 (FLET) and asparagine 187 contribute to the NAD(+) site. Glutamate 191 contributes to the Zn(2+) binding site. 7-phospho-2-dehydro-3-deoxy-D-arabino-heptonate-binding positions include 191–194 (EVVK) and lysine 243. Glutamate 253 serves as the catalytic Proton acceptor; for 3-dehydroquinate synthase activity. 7-phospho-2-dehydro-3-deoxy-D-arabino-heptonate contacts are provided by residues 257-261 (RNLLN) and histidine 264. Histidine 264 is a Zn(2+) binding site. The active-site Proton acceptor; for 3-dehydroquinate synthase activity is the histidine 268. The 7-phospho-2-dehydro-3-deoxy-D-arabino-heptonate site is built by histidine 280 and lysine 351. Histidine 280 provides a ligand contact to Zn(2+). Residues 392–838 (VHPFTNPPKE…WDILHSKFKI (447 aa)) form an EPSP synthase region. Residues 858 to 1048 (DKSIIVIGMR…VPAGRSAAVV (191 aa)) form a shikimate kinase region. 865-872 (GMRGTGKS) lines the ATP pocket. The segment at 1049–1258 (LTSPDLNEVV…NDEEFLTIGE (210 aa)) is 3-dehydroquinase. Residue arginine 1194 is the Schiff-base intermediate with substrate; for 3-dehydroquinate dehydratase activity of the active site. Residues 1271–1551 (AKKFWVIGSP…EIIHRAVVEE (281 aa)) are shikimate dehydrogenase.

This sequence in the N-terminal section; belongs to the sugar phosphate cyclases superfamily. Dehydroquinate synthase family. The protein in the 2nd section; belongs to the EPSP synthase family. In the 3rd section; belongs to the shikimate kinase family. It in the 4th section; belongs to the type-I 3-dehydroquinase family. This sequence in the C-terminal section; belongs to the shikimate dehydrogenase family. In terms of assembly, homodimer. Zn(2+) serves as cofactor.

The protein localises to the cytoplasm. The enzyme catalyses 7-phospho-2-dehydro-3-deoxy-D-arabino-heptonate = 3-dehydroquinate + phosphate. The catalysed reaction is 3-dehydroquinate = 3-dehydroshikimate + H2O. It carries out the reaction shikimate + NADP(+) = 3-dehydroshikimate + NADPH + H(+). It catalyses the reaction shikimate + ATP = 3-phosphoshikimate + ADP + H(+). The enzyme catalyses 3-phosphoshikimate + phosphoenolpyruvate = 5-O-(1-carboxyvinyl)-3-phosphoshikimate + phosphate. It participates in metabolic intermediate biosynthesis; chorismate biosynthesis; chorismate from D-erythrose 4-phosphate and phosphoenolpyruvate: step 2/7. It functions in the pathway metabolic intermediate biosynthesis; chorismate biosynthesis; chorismate from D-erythrose 4-phosphate and phosphoenolpyruvate: step 3/7. Its pathway is metabolic intermediate biosynthesis; chorismate biosynthesis; chorismate from D-erythrose 4-phosphate and phosphoenolpyruvate: step 4/7. The protein operates within metabolic intermediate biosynthesis; chorismate biosynthesis; chorismate from D-erythrose 4-phosphate and phosphoenolpyruvate: step 5/7. It participates in metabolic intermediate biosynthesis; chorismate biosynthesis; chorismate from D-erythrose 4-phosphate and phosphoenolpyruvate: step 6/7. Functionally, the AROM polypeptide catalyzes 5 consecutive enzymatic reactions in prechorismate polyaromatic amino acid biosynthesis. This Candida albicans (strain SC5314 / ATCC MYA-2876) (Yeast) protein is Pentafunctional AROM polypeptide.